Consider the following 367-residue polypeptide: Aminomethyltransferase (367 aa).

The protein belongs to the GcvT family. In terms of assembly, the glycine cleavage system is composed of four proteins: P, T, L and H.

The enzyme catalyses N(6)-[(R)-S(8)-aminomethyldihydrolipoyl]-L-lysyl-[protein] + (6S)-5,6,7,8-tetrahydrofolate = N(6)-[(R)-dihydrolipoyl]-L-lysyl-[protein] + (6R)-5,10-methylene-5,6,7,8-tetrahydrofolate + NH4(+). Functionally, the glycine cleavage system catalyzes the degradation of glycine. The polypeptide is Aminomethyltransferase (Parasynechococcus marenigrum (strain WH8102)).